Consider the following 371-residue polypeptide: MRLVLLNYGIWHDRRSALKFTDIDYFVFSDASKYVSIGMSPYMRDTYRYTPMLAILLLPTQYGFPSWGKYLFSISDLIAGWLMIKLLSRRISYKRSLIYSSFWILNPFVAIISTRGNCEAILGILSIALLYLIEKKSVWLASLILGFSVHFKIYPFMYGIAFLVYFSKPKKGSTFMEKFLSLLSINQLKIVVGSLFMFTICNLLMYYLYGSPFLEHTYLYHFGRTDHRHNFSLHHLNLYYESSFGAKASSLFAFLPQLSLCMLIPLVFGKKNLPGTLFAQTFAFVTFNKVCTSQYFMWYLVFLPLVLPNSKLLSKKGLICLSLWIIGQLLWLISAYNLEMLGKSVFIPLWLSGLLFFFFNVYELKIILDSL.

Transmembrane regions (helical) follow at residues 64-84 (FPSW…WLMI), 120-140 (AILG…SVWL), 144-164 (ILGF…AFLV), 190-210 (IVVG…YLYG), 248-268 (ASSL…PLVF), 290-310 (VCTS…LPNS), 318-338 (LICL…AYNL), and 344-364 (SVFI…VYEL).

The protein belongs to the PIGM family.

The protein localises to the endoplasmic reticulum membrane. It participates in glycolipid biosynthesis; glycosylphosphatidylinositol-anchor biosynthesis. Its function is as follows. Mannosyltransferase involved in glycosylphosphatidylinositol-anchor biosynthesis. Transfers the first alpha-1,4-mannose to GlcN-acyl-PI during GPI precursor assembly. Required for cell wall integrity. The sequence is that of GPI mannosyltransferase 1 (gpi14) from Schizosaccharomyces pombe (strain 972 / ATCC 24843) (Fission yeast).